The primary structure comprises 239 residues: 1-(5-phosphoribosyl)-5-[(5-phosphoribosylamino)methylideneamino] imidazole-4-carboxamide isomerase (239 aa).

Aspartate 8 (proton acceptor) is an active-site residue. Aspartate 129 serves as the catalytic Proton donor.

The protein belongs to the HisA/HisF family.

The protein resides in the cytoplasm. It catalyses the reaction 1-(5-phospho-beta-D-ribosyl)-5-[(5-phospho-beta-D-ribosylamino)methylideneamino]imidazole-4-carboxamide = 5-[(5-phospho-1-deoxy-D-ribulos-1-ylimino)methylamino]-1-(5-phospho-beta-D-ribosyl)imidazole-4-carboxamide. The protein operates within amino-acid biosynthesis; L-histidine biosynthesis; L-histidine from 5-phospho-alpha-D-ribose 1-diphosphate: step 4/9. This Bacillus anthracis (strain A0248) protein is 1-(5-phosphoribosyl)-5-[(5-phosphoribosylamino)methylideneamino] imidazole-4-carboxamide isomerase.